Reading from the N-terminus, the 346-residue chain is Phospholipase A1 (346 aa).

Residues 1 to 26 (MRKFAAIFVVFFVQCTHLYSLAQARA) form the signal peptide. The propeptide occupies 27 to 37 (EPDPGVVEYLK). 2 N-linked (GlcNAc...) asparagine glycosylation sites follow: Asn-44 and Asn-72. Ser-167 acts as the Nucleophile in catalysis. Residue Asn-185 is glycosylated (N-linked (GlcNAc...) asparagine). Residues Asp-195 and His-258 each act as charge relay system in the active site.

The protein belongs to the AB hydrolase superfamily. Lipase family. In terms of processing, contains six disulfide bonds. Post-translationally, N-glycosylated; contains mannose. Expressed by the venom gland.

It is found in the secreted. The enzyme catalyses a 1,2-diacyl-sn-glycero-3-phosphocholine + H2O = a 2-acyl-sn-glycero-3-phosphocholine + a fatty acid + H(+). In terms of biological role, catalyzes the hydrolysis of phosphatidylcholine with phospholipase A1 activity. Induces hemolytic activity. Acts as an allergen. In Solenopsis invicta (Red imported fire ant), this protein is Phospholipase A1.